A 172-amino-acid chain; its full sequence is MERAEKREFVTELNEVFKASGSVVVAHYAGATVAQMNDFRSKMRAAGGTVKVAKNRLAKIALQGTEAEGISNLFKGQTLIAYSNDPITAPKVVMDFAKTNDKIVVLGGAMGTTTLNAEGVKSLATLPSLDELRAKLLGMIQTPATRIAGVVAAPASQLARVFSAYAKKDEAA.

It belongs to the universal ribosomal protein uL10 family. In terms of assembly, part of the ribosomal stalk of the 50S ribosomal subunit. The N-terminus interacts with L11 and the large rRNA to form the base of the stalk. The C-terminus forms an elongated spine to which L12 dimers bind in a sequential fashion forming a multimeric L10(L12)X complex.

In terms of biological role, forms part of the ribosomal stalk, playing a central role in the interaction of the ribosome with GTP-bound translation factors. In Rhizobium etli (strain ATCC 51251 / DSM 11541 / JCM 21823 / NBRC 15573 / CFN 42), this protein is Large ribosomal subunit protein uL10.